The primary structure comprises 432 residues: Ribosomal protein uS12 methylthiotransferase RimO (432 aa).

One can recognise an MTTase N-terminal domain in the interval 4–122 (NKVDIITLGC…LISDLGKSYH (119 aa)). 6 residues coordinate [4Fe-4S] cluster: Cys-13, Cys-51, Cys-85, Cys-146, Cys-150, and Cys-153. One can recognise a Radical SAM core domain in the interval 132-363 (TTPRHYAYVK…MRVQEGISAD (232 aa)). Residues 366–432 (ASKVGQTFRV…AFDLYGKVLN (67 aa)) form the TRAM domain.

Belongs to the methylthiotransferase family. RimO subfamily. The cofactor is [4Fe-4S] cluster.

The protein resides in the cytoplasm. It carries out the reaction L-aspartate(89)-[ribosomal protein uS12]-hydrogen + (sulfur carrier)-SH + AH2 + 2 S-adenosyl-L-methionine = 3-methylsulfanyl-L-aspartate(89)-[ribosomal protein uS12]-hydrogen + (sulfur carrier)-H + 5'-deoxyadenosine + L-methionine + A + S-adenosyl-L-homocysteine + 2 H(+). In terms of biological role, catalyzes the methylthiolation of an aspartic acid residue of ribosomal protein uS12. The protein is Ribosomal protein uS12 methylthiotransferase RimO of Parabacteroides distasonis (strain ATCC 8503 / DSM 20701 / CIP 104284 / JCM 5825 / NCTC 11152).